Here is a 111-residue protein sequence, read N- to C-terminus: Translation initiation factor 1A (111 aa).

One can recognise an S1-like domain in the interval 11-83; that stretch reads KKIRLPKEGE…ERADVTWRYT (73 aa).

The protein belongs to the eIF-1A family.

In terms of biological role, seems to be required for maximal rate of protein biosynthesis. Enhances ribosome dissociation into subunits and stabilizes the binding of the initiator Met-tRNA(I) to 40 S ribosomal subunits. This Methanopyrus kandleri (strain AV19 / DSM 6324 / JCM 9639 / NBRC 100938) protein is Translation initiation factor 1A (eIF1A).